Reading from the N-terminus, the 261-residue chain is Phosphatidylglycerol--prolipoprotein diacylglyceryl transferase (261 aa).

The next 4 membrane-spanning stretches (helical) occupy residues 13 to 33, 50 to 70, 86 to 106, and 112 to 132; these read LQIRWYSLSYIFGMIFAYWYI, VISWWVISVILGGRIGYILFY, WNGGMSFHGALVGVMIGMYIF, and IDVLAAFDLGACAVPVGIFFG. Arg133 provides a ligand contact to a 1,2-diacyl-sn-glycero-3-phospho-(1'-sn-glycerol). 3 helical membrane passes run 169–189, 197–217, and 232–252; these read LYEAFGEGFLLFIITNSLFFF, GMLSSVFCIWYGVIRFFIEFV, and ITMGQLLSIFMIIMGFYFIKL.

It belongs to the Lgt family.

The protein resides in the cell inner membrane. The catalysed reaction is L-cysteinyl-[prolipoprotein] + a 1,2-diacyl-sn-glycero-3-phospho-(1'-sn-glycerol) = an S-1,2-diacyl-sn-glyceryl-L-cysteinyl-[prolipoprotein] + sn-glycerol 1-phosphate + H(+). It participates in protein modification; lipoprotein biosynthesis (diacylglyceryl transfer). Catalyzes the transfer of the diacylglyceryl group from phosphatidylglycerol to the sulfhydryl group of the N-terminal cysteine of a prolipoprotein, the first step in the formation of mature lipoproteins. The protein is Phosphatidylglycerol--prolipoprotein diacylglyceryl transferase of Ehrlichia canis (strain Jake).